A 101-amino-acid polypeptide reads, in one-letter code: Apolipoprotein C-II (101 aa).

The first 22 residues, 1–22 (MGIRYLLVLVLVLLVLGCEVQG), serve as a signal peptide directing secretion. A lipid binding region spans residues 66 to 74 (TMDEKIREI). The lipoprotein lipase cofactor stretch occupies residues 78–101 (STAAVSTYAGIFTDQLLSMLKGDQ).

It belongs to the apolipoprotein C2 family. Proapolipoprotein C-II is synthesized as a sialic acid containing glycoprotein which is subsequently desialylated prior to its proteolytic processing. Post-translationally, proapolipoprotein C-II, the major form found in plasma undergoes proteolytic cleavage of its N-terminal hexapeptide to generate apolipoprotein C-II, which occurs as the minor form in plasma.

The protein resides in the secreted. In terms of biological role, component of chylomicrons, very low-density lipoproteins (VLDL), low-density lipoproteins (LDL), and high-density lipoproteins (HDL) in plasma. Plays an important role in lipoprotein metabolism as an activator of lipoprotein lipase. Both proapolipoprotein C-II and apolipoprotein C-II can activate lipoprotein lipase. This is Apolipoprotein C-II (APOC2) from Leptonychotes weddellii (Weddell seal).